Reading from the N-terminus, the 330-residue chain is tRNA pseudouridine synthase B (330 aa).

D42 serves as the catalytic Nucleophile.

Belongs to the pseudouridine synthase TruB family. Type 1 subfamily.

It catalyses the reaction uridine(55) in tRNA = pseudouridine(55) in tRNA. Functionally, responsible for synthesis of pseudouridine from uracil-55 in the psi GC loop of transfer RNAs. This is tRNA pseudouridine synthase B from Lactococcus lactis subsp. cremoris (strain MG1363).